We begin with the raw amino-acid sequence, 293 residues long: 5'-3' exoribonuclease Rnm (293 aa).

Positions 13, 15, 20, 45, 72, 83, 198, 255, and 257 each coordinate Mn(2+).

This sequence belongs to the PHP family. TrpH/YciV subfamily. The cofactor is Mn(2+).

It carries out the reaction a ribonucleoside 3',5'-bisphosphate + H2O = a ribonucleoside 5'-phosphate + phosphate. Functionally, exoribonuclease that catalyzes the last steps of 5S, 16S and 23S rRNA 5'-end maturation. Removes 3 nucleotides (nt) from the 5' end of 5S, 16S and 23S rRNA precursors to generate the mature 5' ends. Precursors with longer extensions are not processed (7 nt at the 5' end of pre-23S rRNA or 66 nt at the 5'-end of 16S rRNA are not processed). 5S and 23S rRNA maturation occurs more efficiently and accurately on ribosomal particles as compared to free RNA; the enzyme overdigests free RNA but generates the correct 5'-end in ribosomes from rnm deletion strains. Efficiently catalyzes the hydrolysis of the 3'-phosphate from 3',5'-bis-phosphonucleotides as well as the successive hydrolysis of 5'-phosphomononucleotides from the 5'-end of short pieces of RNA and DNA, with no specificity toward the identity of the nucleotide base. Is more efficient at hydrolyzing RNA oligonucleotides than DNA oligonucleotides. This enzyme can also hydrolyze annealed DNA duplexes, albeit at a catalytic efficiency approximately 10-fold lower than that of the corresponding single-stranded oligonucleotides. The protein is 5'-3' exoribonuclease Rnm of Escherichia coli (strain K12).